A 485-amino-acid polypeptide reads, in one-letter code: Cysteine--tRNA ligase (485 aa).

Zn(2+) is bound at residue C27. The short motif at 29-39 (ITAYDLCHLGH) is the 'HIGH' region element. Residues C208, H233, and E237 each contribute to the Zn(2+) site. Positions 265-269 (KMSKS) match the 'KMSKS' region motif. K268 is an ATP binding site.

Belongs to the class-I aminoacyl-tRNA synthetase family. In terms of assembly, monomer. The cofactor is Zn(2+).

The protein localises to the cytoplasm. It carries out the reaction tRNA(Cys) + L-cysteine + ATP = L-cysteinyl-tRNA(Cys) + AMP + diphosphate. In Oleidesulfovibrio alaskensis (strain ATCC BAA-1058 / DSM 17464 / G20) (Desulfovibrio alaskensis), this protein is Cysteine--tRNA ligase.